We begin with the raw amino-acid sequence, 256 residues long: Chloroplastic group IIB intron splicing facilitator CRS2, chloroplastic (256 aa).

A chloroplast-targeting transit peptide spans 1–45; the sequence is MSLLAAAIPSTSSHFSAPFLPSFRMPRKSLTAPLHRIRRPRPFTV. Position 74 (Tyr-74) interacts with tRNA. His-79 acts as the Proton acceptor in catalysis. TRNA-binding residues include Tyr-124, Asn-126, and Asn-172.

Belongs to the PTH family. CRS2 subfamily. Interacts with CAF1 and CAF2. Part of large ribonucleo-protein complexes that include group IIB introns and either CAF1 or CAF2.

The protein localises to the plastid. Its subcellular location is the chloroplast stroma. Required for the splicing of group IIB introns in chloroplasts. Forms complexes with either CAF1 or CAF2 which, in turn, interact with RNA and confer intron specificity of the splicing particles. Has no peptidyl-tRNA hydrolase activity. This chain is Chloroplastic group IIB intron splicing facilitator CRS2, chloroplastic (CRS2), found in Zea mays (Maize).